A 775-amino-acid polypeptide reads, in one-letter code: Polyribonucleotide nucleotidyltransferase (775 aa).

A disordered region spans residues 223-247 (DEQVPEKPRKGRRRGRKSSPRKKTD). Basic residues predominate over residues 231–243 (RKGRRRGRKSSPR). Residues aspartate 567 and aspartate 573 each coordinate Mg(2+). Positions 633 to 692 (PRITTISVPVSKIGEVIGPKGKNINQITEDTGARVSIEDDGTVFISATSGGSAEAAVDRI) constitute a KH domain. In terms of domain architecture, S1 motif spans 704 to 773 (GERFLGTVVK…NRGKISLVPV (70 aa)).

Belongs to the polyribonucleotide nucleotidyltransferase family. Requires Mg(2+) as cofactor.

The protein resides in the cytoplasm. It carries out the reaction RNA(n+1) + phosphate = RNA(n) + a ribonucleoside 5'-diphosphate. Its function is as follows. Involved in mRNA degradation. Catalyzes the phosphorolysis of single-stranded polyribonucleotides processively in the 3'- to 5'-direction. The chain is Polyribonucleotide nucleotidyltransferase from Corynebacterium kroppenstedtii (strain DSM 44385 / JCM 11950 / CIP 105744 / CCUG 35717).